A 605-amino-acid polypeptide reads, in one-letter code: Solute carrier family 23 member 1 (605 aa).

Residues Met-1 to Leu-30 are disordered. Over Met-1 to Tyr-59 the chain is Cytoplasmic. A helical membrane pass occupies residues Leu-60 to Gly-80. The Extracellular portion of the chain corresponds to Arg-81–Gln-88. Residues Leu-89 to Ile-109 traverse the membrane as a helical segment. Residue Arg-110 is a topological domain, cytoplasmic. A helical membrane pass occupies residues Leu-111–Leu-131. Topologically, residues Glu-132–Ala-166 are extracellular. N-linked (GlcNAc...) asparagine glycosylation is found at Asn-145 and Asn-151. The chain crosses the membrane as a helical span at residues Ile-167 to Leu-187. Residues Ser-188–Ala-214 lie on the Cytoplasmic side of the membrane. A helical membrane pass occupies residues Gly-215–Ser-232. Over Gln-233 to Arg-236 the chain is Extracellular. The segment at residues Asn-237–Gly-250 is an intramembrane region (helical). Topologically, residues Leu-251–Gln-257 are extracellular. A helical transmembrane segment spans residues Ile-258–Leu-278. The Cytoplasmic segment spans residues Thr-279–Gly-319. Residues Leu-320 to Ile-340 form a helical membrane-spanning segment. Topologically, residues Glu-341–Arg-365 are extracellular. The helical transmembrane segment at Gly-366 to Ser-386 threads the bilayer. Residues Thr-387–Tyr-409 lie on the Cytoplasmic side of the membrane. A helical membrane pass occupies residues Gly-410–Leu-430. Residues Pro-431–Pro-433 are Extracellular-facing. A helical transmembrane segment spans residues Ile-434–Leu-454. Residues Gln-455–Asn-464 are Cytoplasmic-facing. Residues Leu-465–Asn-485 traverse the membrane as a helical segment. The Extracellular portion of the chain corresponds to Pro-486–Asp-497. The chain crosses the membrane as a helical span at residues Gln-498–Leu-518. Over Asp-519 to Val-605 the chain is Cytoplasmic. Phosphothreonine is present on Thr-598. Ser-600 is modified (phosphoserine). Thr-603 carries the phosphothreonine modification.

This sequence belongs to the nucleobase:cation symporter-2 (NCS2) (TC 2.A.40) family. Phosphorylated. As to expression, expressed in kidney (at protein level).

The protein localises to the cell membrane. It carries out the reaction L-ascorbate(out) + 2 Na(+)(out) = L-ascorbate(in) + 2 Na(+)(in). The catalysed reaction is urate(out) + 2 Na(+)(out) = urate(in) + 2 Na(+)(in). In terms of biological role, sodium:L-ascorbate cotransporter. Mediates electrogenic uptake of vitamin C, with a stoichiometry of 2 Na(+) for each L-ascorbate. Has retained some ancestral activity toward nucleobases such as urate, an oxidized purine. Low-affinity high-capacity sodium:urate cotransporter, may regulate serum urate levels by serving as a renal urate re-absorber. The polypeptide is Solute carrier family 23 member 1 (Slc23a1) (Mus musculus (Mouse)).